Here is a 228-residue protein sequence, read N- to C-terminus: MERVKMINVQRLLEAAEFLERRERECEHGYASSFPSMPSPRLQHSKPPRRLSRAQKHSSGSSNTSTANRSTHNELEKNRRAHLRLCLERLKVLIPLGPDCTRHTTLGLLNKAKAHIKKLEEAERKSQHQLENLEREQRFLKWRLEQLQGPQEMERIRMDSIGSTISSDRSDSEREEIEVDVESTEFSHGEVDNISTTSISDIDDHSSLPSIGSDEGYSSASVKLSFTS.

Disordered regions lie at residues 29 to 76 (GYAS…NELE) and 161 to 228 (IGST…SFTS). The segment covering 43-56 (QHSKPPRRLSRAQK) has biased composition (basic residues). Over residues 57–70 (HSSGSSNTSTANRS) the composition is skewed to polar residues. The region spanning 67–119 (ANRSTHNELEKNRRAHLRLCLERLKVLIPLGPDCTRHTTLGLLNKAKAHIKKL) is the bHLH domain. Acidic residues predominate over residues 173 to 183 (EREEIEVDVES). The segment covering 216–228 (GYSSASVKLSFTS) has biased composition (polar residues).

Interacts with SMC3. Efficient DNA binding requires dimerization with another bHLH protein. Binds DNA as a heterodimer with MAX. Interacts with RNF17. As to expression, high levels found in the brain, heart and lung while lower levels are seen in the liver, kidney and skeletal muscle.

Its subcellular location is the nucleus. Functionally, transcriptional repressor. MXI1 binds with MAX to form a sequence-specific DNA-binding protein complex which recognizes the core sequence 5'-CAC[GA]TG-3'. MXI1 thus antagonizes MYC transcriptional activity by competing for MAX. This Homo sapiens (Human) protein is Max-interacting protein 1 (MXI1).